The chain runs to 239 residues: Protein LIFEGUARD 2 (239 aa).

The next 7 membrane-spanning stretches (helical) occupy residues 41-61, 66-86, 96-116, 121-141, 156-176, 179-199, and 213-233; these read LLVT…SVFF, AGFA…CPLY, YLLL…TCAF, VILE…LYTF, FLFG…LFPL, ISVM…IVYD, and IWAA…LLTL.

The protein belongs to the BI1 family. In terms of tissue distribution, expressed in seedlings, roots, leaves, inflorescences and flowers.

It localises to the membrane. In terms of biological role, regulates the brassinosteroid (BR) signaling pathway that mediates cell elongation and organ morphogenesis. Its function is as follows. (Microbial infection) Facilitates the development of the powdery mildew fungus E.cruciferarum. Functionally, (Microbial infection) May prevent cell death upon A.alternata f.sp. lycopersici (AAL) toxin treatment. This Arabidopsis thaliana (Mouse-ear cress) protein is Protein LIFEGUARD 2.